A 453-amino-acid polypeptide reads, in one-letter code: Regulatory protein opaque-2 (453 aa).

Residues 145-243 (SSVVTSDQRS…SNRESARRSR (99 aa)) are disordered. Residues 146–175 (SVVTSDQRSQGSNNHTGGSSIRNNPVQNKL) are compositionally biased toward polar residues. Over residues 207 to 216 (PSDEDMDGEV) the composition is skewed to acidic residues. Over residues 224-240 (PTEERVRKKESNRESAR) the composition is skewed to basic and acidic residues. In terms of domain architecture, bZIP spans 225 to 288 (TEERVRKKES…NDANVDNRVL (64 aa)). The interval 228–251 (RVRKKESNRESARRSRYRKAAHLK) is basic motif. Residues 253-274 (LEDQVAQLKAENSCLLRRIAAL) are leucine-zipper.

This sequence belongs to the bZIP family. Interacts with the Dof zinc finger protein PBF. Seed endosperm.

Its subcellular location is the nucleus. Its function is as follows. Involved in the regulation of the endosperm-specific production of albumin b-32 and other zein proteins. It is a trans-acting transcriptional activator that binds to the consensus sequence 5'-GATGAYRTGR-3'. This is Regulatory protein opaque-2 (O2) from Zea mays (Maize).